The following is a 508-amino-acid chain: Photosystem II CP47 reaction center protein (508 aa).

Transmembrane regions (helical) follow at residues 21 to 36 (SVHI…WAGS), 101 to 115 (IVFS…IWHW), 140 to 156 (GIHL…FGAF), 203 to 218 (IAAG…FHLS), 237 to 252 (VLSS…AFVV), and 457 to 472 (SFAL…HGSR).

It belongs to the PsbB/PsbC family. PsbB subfamily. PSII is composed of 1 copy each of membrane proteins PsbA, PsbB, PsbC, PsbD, PsbE, PsbF, PsbH, PsbI, PsbJ, PsbK, PsbL, PsbM, PsbT, PsbX, PsbY, PsbZ, Psb30/Ycf12, at least 3 peripheral proteins of the oxygen-evolving complex and a large number of cofactors. It forms dimeric complexes. Binds multiple chlorophylls. PSII binds additional chlorophylls, carotenoids and specific lipids. is required as a cofactor.

Its subcellular location is the plastid. The protein resides in the chloroplast thylakoid membrane. One of the components of the core complex of photosystem II (PSII). It binds chlorophyll and helps catalyze the primary light-induced photochemical processes of PSII. PSII is a light-driven water:plastoquinone oxidoreductase, using light energy to abstract electrons from H(2)O, generating O(2) and a proton gradient subsequently used for ATP formation. The chain is Photosystem II CP47 reaction center protein from Fagopyrum esculentum subsp. ancestrale (Wild buckwheat).